Reading from the N-terminus, the 254-residue chain is Phosphoribosylaminoimidazole-succinocarboxamide synthase (254 aa).

Belongs to the SAICAR synthetase family.

It carries out the reaction 5-amino-1-(5-phospho-D-ribosyl)imidazole-4-carboxylate + L-aspartate + ATP = (2S)-2-[5-amino-1-(5-phospho-beta-D-ribosyl)imidazole-4-carboxamido]succinate + ADP + phosphate + 2 H(+). The protein operates within purine metabolism; IMP biosynthesis via de novo pathway; 5-amino-1-(5-phospho-D-ribosyl)imidazole-4-carboxamide from 5-amino-1-(5-phospho-D-ribosyl)imidazole-4-carboxylate: step 1/2. This chain is Phosphoribosylaminoimidazole-succinocarboxamide synthase, found in Bartonella quintana (strain Toulouse) (Rochalimaea quintana).